A 142-amino-acid polypeptide reads, in one-letter code: FAD synthase (142 aa).

ATP contacts are provided by residues Thr9–Phe10, His14–His17, and Asp92.

Belongs to the archaeal FAD synthase family. In terms of assembly, homodimer. A divalent metal cation is required as a cofactor.

It carries out the reaction FMN + ATP + H(+) = FAD + diphosphate. It functions in the pathway cofactor biosynthesis; FAD biosynthesis; FAD from FMN: step 1/1. Functionally, catalyzes the transfer of the AMP portion of ATP to flavin mononucleotide (FMN) to produce flavin adenine dinucleotide (FAD) coenzyme. This is FAD synthase from Methanohalophilus mahii (strain ATCC 35705 / DSM 5219 / SLP).